The chain runs to 591 residues: Serine/threonine-protein kinase Nek2 (591 aa).

The Protein kinase domain maps to 4 to 258; that stretch reads YEVLEQIGKG…AAQLLKHPQL (255 aa). ATP-binding positions include 10 to 18 and lysine 33; that span reads IGKGAFGSA. Aspartate 129 functions as the Proton acceptor in the catalytic mechanism. Disordered regions lie at residues 309-331, 387-408, and 500-534; these read LGNE…SSTR, EPPK…TTPN, and RTDG…DTSS. Composition is skewed to polar residues over residues 391 to 408 and 504 to 534; these read TSYN…TTPN and DNGS…DTSS.

This sequence belongs to the protein kinase superfamily. NEK Ser/Thr protein kinase family. NIMA subfamily.

It catalyses the reaction L-seryl-[protein] + ATP = O-phospho-L-seryl-[protein] + ADP + H(+). The catalysed reaction is L-threonyl-[protein] + ATP = O-phospho-L-threonyl-[protein] + ADP + H(+). Functionally, may be involved in plant development processes. The polypeptide is Serine/threonine-protein kinase Nek2 (NEK2) (Oryza sativa subsp. indica (Rice)).